Reading from the N-terminus, the 197-residue chain is Nucleoid occlusion factor SlmA (197 aa).

The region spanning 7-67 (INRREHILQC…GLIEFIEESL (61 aa)) is the HTH tetR-type domain. The H-T-H motif DNA-binding region spans 30-49 (TTAKLAAEVGVSEAALYRHF). Residues 109 to 136 (DALLGENERLRSRISQLFSKIETHLKQI) adopt a coiled-coil conformation.

The protein belongs to the nucleoid occlusion factor SlmA family. As to quaternary structure, homodimer. Interacts with FtsZ.

Its subcellular location is the cytoplasm. The protein localises to the nucleoid. Required for nucleoid occlusion (NO) phenomenon, which prevents Z-ring formation and cell division over the nucleoid. Acts as a DNA-associated cell division inhibitor that binds simultaneously chromosomal DNA and FtsZ, and disrupts the assembly of FtsZ polymers. SlmA-DNA-binding sequences (SBS) are dispersed on non-Ter regions of the chromosome, preventing FtsZ polymerization at these regions. This chain is Nucleoid occlusion factor SlmA, found in Shewanella pealeana (strain ATCC 700345 / ANG-SQ1).